A 398-amino-acid polypeptide reads, in one-letter code: UPF0261 protein RA0729 (398 aa).

Belongs to the UPF0261 family.

The protein is UPF0261 protein RA0729 of Rhizobium meliloti (strain 1021) (Ensifer meliloti).